A 377-amino-acid chain; its full sequence is Actin-related protein T2 (377 aa).

Belongs to the actin family.

It localises to the cytoplasm. The protein resides in the cytoskeleton. In Macaca fascicularis (Crab-eating macaque), this protein is Actin-related protein T2 (ACTRT2).